The chain runs to 568 residues: Nucleoprotein (568 aa).

The segment at 54 to 240 (MRKEKRDDSD…IDGNKSAINI (187 aa)) is binding site for the cap structure m7GTP. Mn(2+) is bound by residues D388 and E390. Zn(2+) contacts are provided by E398, C505, H508, and C528. D532 provides a ligand contact to Mn(2+).

Belongs to the arenaviridae nucleocapsid protein family. In terms of assembly, homomultimerizes to form the nucleocapsid. Binds to viral genomic RNA. Interacts with glycoprotein G2. Interacts with protein Z; this interaction probably directs the encapsidated genome to budding sites. Interacts with protein L; this interaction does not interfere with Z-L interaction. Interacts with host IKBKE (via Protein kinase domain); the interaction inhibits IKBKE kinase activity.

It localises to the virion. Its subcellular location is the host cytoplasm. Functionally, encapsidates the genome, protecting it from nucleases. The encapsidated genomic RNA is termed the nucleocapsid (NC). Serves as template for viral transcription and replication. The increased presence of protein N in host cell does not seem to trigger the switch from transcription to replication as observed in other negative strain RNA viruses. Through the interaction with host IKBKE, strongly inhibits the phosphorylation and nuclear translocation of host IRF3, a protein involved in interferon activation pathway, leading to the inhibition of interferon-beta and IRF3-dependent promoters activation. Also encodes a functional 3'-5' exoribonuclease that degrades preferentially dsRNA substrates and thereby participates in the suppression of interferon induction. In Praomys (African soft-furred rats), this protein is Nucleoprotein.